A 589-amino-acid chain; its full sequence is Bifunctional protein TrpGD (589 aa).

One can recognise a Glutamine amidotransferase type-1 domain in the interval 46-241; it reads RVIVIDNYDS…LNIQDIQVKK (196 aa). Position 99-101 (99-101) interacts with L-glutamine; it reads GPG. Catalysis depends on Cys-126, which acts as the Nucleophile; for GATase activity. L-glutamine contacts are provided by residues Gln-130 and 176–177; that span reads SL. Catalysis depends on for GATase activity residues His-215 and Glu-217. Residues 253-589 form an anthranilate phosphoribosyltransferase region; the sequence is ALKKLVEFED…MDYQKTLGNS (337 aa).

This sequence in the C-terminal section; belongs to the anthranilate phosphoribosyltransferase family. As to quaternary structure, heterotetramer consisting of two non-identical subunits: a beta subunit (TrpG) and a large alpha subunit (TrpE).

The catalysed reaction is chorismate + L-glutamine = anthranilate + pyruvate + L-glutamate + H(+). It catalyses the reaction N-(5-phospho-beta-D-ribosyl)anthranilate + diphosphate = 5-phospho-alpha-D-ribose 1-diphosphate + anthranilate. It functions in the pathway amino-acid biosynthesis; L-tryptophan biosynthesis; L-tryptophan from chorismate: step 1/5. The protein operates within amino-acid biosynthesis; L-tryptophan biosynthesis; L-tryptophan from chorismate: step 2/5. Part of a heterotetrameric complex that catalyzes the two-step biosynthesis of anthranilate, an intermediate in the biosynthesis of L-tryptophan. In the first step, the glutamine-binding beta subunit (TrpG) of anthranilate synthase (AS) provides the glutamine amidotransferase activity which generates ammonia as a substrate that, along with chorismate, is used in the second step, catalyzed by the large alpha subunit of AS (TrpE) to produce anthranilate. In the absence of TrpG, TrpE can synthesize anthranilate directly from chorismate and high concentrations of ammonia. In addition to synthesizing anthranilate, it also catalyzes the second step of the pathway, the transfer of the phosphoribosyl group of 5-phosphorylribose-1-pyrophosphate (PRPP) to anthranilate. The polypeptide is Bifunctional protein TrpGD (trpGD) (Thermotoga maritima (strain ATCC 43589 / DSM 3109 / JCM 10099 / NBRC 100826 / MSB8)).